A 322-amino-acid chain; its full sequence is Acetyl-coenzyme A carboxylase carboxyl transferase subunit alpha (322 aa).

The 264-residue stretch at 30–293 folds into the CoA carboxyltransferase C-terminal domain; the sequence is ALDISAEIAR…KQTLQESLRK (264 aa).

It belongs to the AccA family. As to quaternary structure, acetyl-CoA carboxylase is a heterohexamer composed of biotin carboxyl carrier protein (AccB), biotin carboxylase (AccC) and two subunits each of ACCase subunit alpha (AccA) and ACCase subunit beta (AccD).

The protein localises to the cytoplasm. The catalysed reaction is N(6)-carboxybiotinyl-L-lysyl-[protein] + acetyl-CoA = N(6)-biotinyl-L-lysyl-[protein] + malonyl-CoA. Its pathway is lipid metabolism; malonyl-CoA biosynthesis; malonyl-CoA from acetyl-CoA: step 1/1. In terms of biological role, component of the acetyl coenzyme A carboxylase (ACC) complex. First, biotin carboxylase catalyzes the carboxylation of biotin on its carrier protein (BCCP) and then the CO(2) group is transferred by the carboxyltransferase to acetyl-CoA to form malonyl-CoA. The polypeptide is Acetyl-coenzyme A carboxylase carboxyl transferase subunit alpha (Nitrosomonas europaea (strain ATCC 19718 / CIP 103999 / KCTC 2705 / NBRC 14298)).